Reading from the N-terminus, the 404-residue chain is MSPAQQLTLPAVIVVASVMLLGCEGPPPGTEQIGYRGVGMENYYNKRQRALSIQANQPVESLPAADSTGPKASEVYQNVQVLKDLSVGEFTRTMVAVTTWVSPKEGCNYCHVPGNWASDDIYTKVVSRRMFELVRAANSDWKAHVAETGVTCYTCHRGNPVPKYAWVTDPGPKYPSGLKPTGQNYGSKTVAYASLPFDPLTPFLDQANEIRITGNAALAGSNPASLKQAEWTFGLMMNISDSLGVGCTFCHNTRAFNDWTQSTPKRTTAWYAIRHVRDINQNYIWPLNDVLPASRKGPYGDPLRVSCMTCHQAVNKPLYGAQMAKDYPGLYKTAVTQEALAGSAPASEAAPAAATEAAPEAPAQEVPAAEAVPAAAEPGAAEAAGSVEPAPVEEVAPAPAAQRL.

Residues 1 to 22 form the signal peptide; the sequence is MSPAQQLTLPAVIVVASVMLLG. Cys23 is lipidated: N-palmitoyl cysteine. Residue Cys23 is the site of S-diacylglycerol cysteine attachment. Heme-binding residues include Met94, Cys107, Cys110, His111, Met130, His144, Cys152, Cys155, His156, Met236, Cys247, Cys250, His251, Cys307, Cys310, and His311. The interval 346-404 is disordered; the sequence is ASEAAPAAATEAAPEAPAQEVPAAEAVPAAAEPGAAEAAGSVEPAPVEEVAPAPAAQRL.

As to quaternary structure, component of the photosynthetic reaction center composed of protein subunits L (PufL), M (PufM), H (PuhA) and cytochrome C (PufC). The reaction center interacts with light-harvesting antenna complex LH1. In terms of processing, binds 4 heme groups per subunit.

The protein resides in the cellular chromatophore membrane. The reaction center of purple bacteria contains a tightly bound cytochrome molecule which re-reduces the photo oxidized primary electron donor. This chain is Photosynthetic reaction center cytochrome c subunit, found in Thermochromatium tepidum (Chromatium tepidum).